The primary structure comprises 136 residues: Inner membrane protein YbhQ (136 aa).

At 1–12 (MKWQQRVRVATG) the chain is on the cytoplasmic side. Residues 13–33 (LSCWQIMLHLLVVALLVVGWM) traverse the membrane as a helical segment. Residues 34–37 (SKTL) lie on the Periplasmic side of the membrane. Residues 38 to 58 (VHVGVGLCALYCVTVVMMLVF) form a helical membrane-spanning segment. The Cytoplasmic segment spans residues 59 to 71 (QRHPEQRWREVAD). Residues 72–92 (VLEELTTTWYFGAALIVLWLL) traverse the membrane as a helical segment. The Periplasmic segment spans residues 93 to 99 (SRVLENN). The chain crosses the membrane as a helical span at residues 100-120 (FLLAIAGLAILAGPAVVSLLA). Residues 121 to 136 (KDKKLHHLTSKHRVRR) are Cytoplasmic-facing.

It localises to the cell inner membrane. This is Inner membrane protein YbhQ (ybhQ) from Escherichia coli O157:H7.